Reading from the N-terminus, the 588-residue chain is Ribonuclease Y (588 aa).

The helical transmembrane segment at 7 to 27 threads the bilayer; that stretch reads VLLVAVLLLALIVLGAVLVGV. The tract at residues 130 to 162 is disordered; it reads ARRSGEREAAVLATTTREQAAEVERRAARMDDR. Residues 148 to 162 are compositionally biased toward basic and acidic residues; it reads QAAEVERRAARMDDR. One can recognise a KH domain in the interval 278 to 359; the sequence is VVSVLHLPGD…HRIEEVHDLA (82 aa). The 94-residue stretch at 404 to 497 folds into the HD domain; the sequence is VLKHLVETAH…TQASDACSGG (94 aa).

The protein belongs to the RNase Y family.

The protein localises to the cell membrane. Functionally, endoribonuclease that initiates mRNA decay. This Salinispora arenicola (strain CNS-205) protein is Ribonuclease Y.